A 137-amino-acid chain; its full sequence is Probable 4-amino-4-deoxy-L-arabinose-phosphoundecaprenol flippase subunit ArnF (137 aa).

The next 3 helical transmembrane spans lie at 43-63 (AIAV…FWLL), 74-94 (YSLL…LPFF), and 98-118 (FTVS…TINL).

This sequence belongs to the ArnF family. Heterodimer of ArnE and ArnF.

It is found in the cell inner membrane. The protein operates within bacterial outer membrane biogenesis; lipopolysaccharide biosynthesis. In terms of biological role, translocates 4-amino-4-deoxy-L-arabinose-phosphoundecaprenol (alpha-L-Ara4N-phosphoundecaprenol) from the cytoplasmic to the periplasmic side of the inner membrane. This Pseudomonas savastanoi pv. phaseolicola (strain 1448A / Race 6) (Pseudomonas syringae pv. phaseolicola (strain 1448A / Race 6)) protein is Probable 4-amino-4-deoxy-L-arabinose-phosphoundecaprenol flippase subunit ArnF.